A 96-amino-acid polypeptide reads, in one-letter code: Co-chaperonin GroES (96 aa).

This sequence belongs to the GroES chaperonin family. Heptamer of 7 subunits arranged in a ring. Interacts with the chaperonin GroEL.

The protein localises to the cytoplasm. Its function is as follows. Together with the chaperonin GroEL, plays an essential role in assisting protein folding. The GroEL-GroES system forms a nano-cage that allows encapsulation of the non-native substrate proteins and provides a physical environment optimized to promote and accelerate protein folding. GroES binds to the apical surface of the GroEL ring, thereby capping the opening of the GroEL channel. This is Co-chaperonin GroES from Hydrogenobaculum sp. (strain Y04AAS1).